The sequence spans 412 residues: Phosphoglycerate kinase, plasmid (412 aa).

Substrate-binding positions include 39-41 (DLN), Arg-55, 78-81 (HLGR), Arg-133, and Arg-166. ATP contacts are provided by residues Lys-217, Glu-339, and 365-368 (GGDT).

It belongs to the phosphoglycerate kinase family. In terms of assembly, monomer.

The protein localises to the cytoplasm. The enzyme catalyses (2R)-3-phosphoglycerate + ATP = (2R)-3-phospho-glyceroyl phosphate + ADP. The protein operates within carbohydrate biosynthesis; Calvin cycle. The sequence is that of Phosphoglycerate kinase, plasmid (cbbKP) from Cupriavidus necator (strain ATCC 17699 / DSM 428 / KCTC 22496 / NCIMB 10442 / H16 / Stanier 337) (Ralstonia eutropha).